We begin with the raw amino-acid sequence, 519 residues long: MKGSPVLAVCAAALTLIPSVVALPMIDKDLPSSISQSSDKTSQERAEAVKAAFRFAWEGYLEHAFPNDELHPVSNTPGNSRNGWGASAVDALSTAIIMDMPDVVEKILDHISNIDYSQTDTMCSLFETTIRYLGGMISAYDLLKGPGSHLVSDPAKVDVLLAQSLKLADVLKFAFDTKTGIPANELNITDKSTDGSTTNGLATTGTLVLEWTRLSDITGDPEYGRLAQKGESYLLNPQPSSSEPFPGLVGRTIDIETGLFRDDYVSWGGGSDSFYEYLIKMYVYDKGRFGKYKDRWVTAAESTIEHLKSSPSTRKDLTFVATYSGGRLGLNSGHLTCFDGGNFLLGGQILNRDDFTKFGLELVEGCYATYAATATKIGPEGFGWDATKVPEAQAEFYKEAGFYITTSYYNLRPEVIESIYYAYRMTKDPKYQEWAWDAFVAINATTRTSTGFTAIGDVNTPDGGRKYDNQESFLFAEVMKYSYLIHSPEADWQVAGPGGTNAYVFNTEAHPVKVFSRGC.

The first 22 residues, 1–22, serve as a signal peptide directing secretion; it reads MKGSPVLAVCAAALTLIPSVVA. An N-linked (GlcNAc...) asparagine glycan is attached at Asn187. An intrachain disulfide couples Cys337 to Cys366. The Proton donor role is filled by Glu380. N-linked (GlcNAc...) asparagine glycosylation is present at Asn443. Ca(2+) is bound at residue Thr507.

This sequence belongs to the glycosyl hydrolase 47 family. Monomer. Ca(2+) serves as cofactor. It depends on Mg(2+) as a cofactor.

It localises to the secreted. The enzyme catalyses N(4)-(alpha-D-Man-(1-&gt;2)-alpha-D-Man-(1-&gt;2)-alpha-D-Man-(1-&gt;3)-[alpha-D-Man-(1-&gt;2)-alpha-D-Man-(1-&gt;3)-[alpha-D-Man-(1-&gt;2)-alpha-D-Man-(1-&gt;6)]-alpha-D-Man-(1-&gt;6)]-beta-D-Man-(1-&gt;4)-beta-D-GlcNAc-(1-&gt;4)-beta-D-GlcNAc)-L-asparaginyl-[protein] (N-glucan mannose isomer 9A1,2,3B1,2,3) + 4 H2O = N(4)-(alpha-D-Man-(1-&gt;3)-[alpha-D-Man-(1-&gt;3)-[alpha-D-Man-(1-&gt;6)]-alpha-D-Man-(1-&gt;6)]-beta-D-Man-(1-&gt;4)-beta-D-GlcNAc-(1-&gt;4)-beta-D-GlcNAc)-L-asparaginyl-[protein] (N-glucan mannose isomer 5A1,2) + 4 beta-D-mannose. It catalyses the reaction N(4)-(alpha-D-Man-(1-&gt;2)-alpha-D-Man-(1-&gt;2)-alpha-D-Man-(1-&gt;3)-[alpha-D-Man-(1-&gt;3)-[alpha-D-Man-(1-&gt;2)-alpha-D-Man-(1-&gt;6)]-alpha-D-Man-(1-&gt;6)]-beta-D-Man-(1-&gt;4)-beta-D-GlcNAc-(1-&gt;4)-beta-D-GlcNAc)-L-asparaginyl-[protein] (N-glucan mannose isomer 8A1,2,3B1,3) + 3 H2O = N(4)-(alpha-D-Man-(1-&gt;3)-[alpha-D-Man-(1-&gt;3)-[alpha-D-Man-(1-&gt;6)]-alpha-D-Man-(1-&gt;6)]-beta-D-Man-(1-&gt;4)-beta-D-GlcNAc-(1-&gt;4)-beta-D-GlcNAc)-L-asparaginyl-[protein] (N-glucan mannose isomer 5A1,2) + 3 beta-D-mannose. The protein operates within protein modification; protein glycosylation. Alpha-mannosidase involved in the maturation of Asn-linked oligosaccharides. Progressively trims alpha-1,2-linked mannose residues from Man(9)GlcNAc(2) to produce Man(5)GlcNAc(2). The sequence is that of Mannosyl-oligosaccharide alpha-1,2-mannosidase from Coccidioides posadasii (strain RMSCC 757 / Silveira) (Valley fever fungus).